The sequence spans 90 residues: Large ribosomal subunit protein bL31B-1 (90 aa).

The protein belongs to the bacterial ribosomal protein bL31 family. Type B subfamily. In terms of assembly, part of the 50S ribosomal subunit.

The chain is Large ribosomal subunit protein bL31B-1 from Streptomyces coelicolor (strain ATCC BAA-471 / A3(2) / M145).